Here is a 488-residue protein sequence, read N- to C-terminus: Sterol 14-demethylase (488 aa).

A helical membrane pass occupies residues 12 to 32; it reads TGLVIVATLVIAKLIFSFFTS. Cys433 lines the heme pocket.

Belongs to the cytochrome P450 family. Heme serves as cofactor. In terms of tissue distribution, expressed in leaves, roots, stems, siliques, flowers, flower buds and seedlings.

The protein localises to the membrane. It carries out the reaction a 14alpha-methyl steroid + 3 reduced [NADPH--hemoprotein reductase] + 3 O2 = a Delta(14) steroid + formate + 3 oxidized [NADPH--hemoprotein reductase] + 4 H2O + 4 H(+). Functionally, involved in sterol biosynthesis. Catalyzes the 14-alpha demethylation of obtusifoliol to 4 alpha-methyl-5 alpha-ergosta-8,14,24(28)-trien-3 beta-ol. The chain is Sterol 14-demethylase (CYP51G1) from Arabidopsis thaliana (Mouse-ear cress).